The sequence spans 174 residues: Gamma-crystallin F (174 aa).

2 consecutive Beta/gamma crystallin 'Greek key' domains span residues 2–40 (GKIT…RVDS) and 41–83 (GCWM…HLIP). The connecting peptide stretch occupies residues 84-87 (HSSS). 2 Beta/gamma crystallin 'Greek key' domains span residues 88–128 (HRIR…HVIE) and 129–171 (GYWV…RRIM).

Belongs to the beta/gamma-crystallin family.

Functionally, crystallins are the dominant structural components of the vertebrate eye lens. The sequence is that of Gamma-crystallin F (Crygf) from Rattus norvegicus (Rat).